We begin with the raw amino-acid sequence, 182 residues long: Ribosome-recycling factor (182 aa).

Belongs to the RRF family.

The protein resides in the cytoplasm. Its function is as follows. Responsible for the release of ribosomes from messenger RNA at the termination of protein biosynthesis. May increase the efficiency of translation by recycling ribosomes from one round of translation to another. The chain is Ribosome-recycling factor from Synechococcus sp. (strain JA-2-3B'a(2-13)) (Cyanobacteria bacterium Yellowstone B-Prime).